We begin with the raw amino-acid sequence, 555 residues long: Formate--tetrahydrofolate ligase (555 aa).

Position 65–72 (65–72 (TPAGEGKS)) interacts with ATP.

Belongs to the formate--tetrahydrofolate ligase family.

It catalyses the reaction (6S)-5,6,7,8-tetrahydrofolate + formate + ATP = (6R)-10-formyltetrahydrofolate + ADP + phosphate. Its pathway is one-carbon metabolism; tetrahydrofolate interconversion. This chain is Formate--tetrahydrofolate ligase, found in Staphylococcus aureus (strain bovine RF122 / ET3-1).